A 251-amino-acid chain; its full sequence is Triosephosphate isomerase (251 aa).

A substrate-binding site is contributed by Asn9 to Lys11. His95 acts as the Electrophile in catalysis. Residue Glu167 is the Proton acceptor of the active site. Residues Gly173, Ser213, and Gly234–Gly235 contribute to the substrate site. A Phosphoserine modification is found at Ser213.

This sequence belongs to the triosephosphate isomerase family. Homodimer.

The protein localises to the cytoplasm. It catalyses the reaction D-glyceraldehyde 3-phosphate = dihydroxyacetone phosphate. It participates in carbohydrate biosynthesis; gluconeogenesis. It functions in the pathway carbohydrate degradation; glycolysis; D-glyceraldehyde 3-phosphate from glycerone phosphate: step 1/1. In terms of biological role, involved in the gluconeogenesis. Catalyzes stereospecifically the conversion of dihydroxyacetone phosphate (DHAP) to D-glyceraldehyde-3-phosphate (G3P). This chain is Triosephosphate isomerase, found in Bacillus cereus (strain G9842).